The following is a 295-amino-acid chain: Universal stress protein Mb2028c (295 aa).

Residues G13, 117–123 (GSSGRGA), 131–132 (SV), G165, D198, 262–268 (GSHGRGG), and 276–278 (SVS) contribute to the ATP site.

It belongs to the universal stress protein A family.

This is Universal stress protein Mb2028c from Mycobacterium bovis (strain ATCC BAA-935 / AF2122/97).